Here is a 420-residue protein sequence, read N- to C-terminus: 3-phosphoshikimate 1-carboxyvinyltransferase (420 aa).

Residues 1 to 24 form a disordered region; the sequence is MTRTAKLTIIPPGRPLSGRAMPPG. The 3-phosphoshikimate site is built by Lys26, Ser27, and Arg31. Lys26 serves as a coordination point for phosphoenolpyruvate. Phosphoenolpyruvate is bound by residues Gly97 and Arg125. Residues Ser170, Ser171, Gln172, Asp297, Asn320, and Lys324 each contribute to the 3-phosphoshikimate site. Gln172 lines the phosphoenolpyruvate pocket. Residue Asp297 is the Proton acceptor of the active site. Phosphoenolpyruvate contacts are provided by Arg328, Arg375, and Lys400.

It belongs to the EPSP synthase family. Monomer.

Its subcellular location is the cytoplasm. The enzyme catalyses 3-phosphoshikimate + phosphoenolpyruvate = 5-O-(1-carboxyvinyl)-3-phosphoshikimate + phosphate. It participates in metabolic intermediate biosynthesis; chorismate biosynthesis; chorismate from D-erythrose 4-phosphate and phosphoenolpyruvate: step 6/7. Catalyzes the transfer of the enolpyruvyl moiety of phosphoenolpyruvate (PEP) to the 5-hydroxyl of shikimate-3-phosphate (S3P) to produce enolpyruvyl shikimate-3-phosphate and inorganic phosphate. This Rhizobium etli (strain CIAT 652) protein is 3-phosphoshikimate 1-carboxyvinyltransferase.